A 167-amino-acid chain; its full sequence is Antibacterial peptide PMAP-37 (167 aa).

Residues 1–29 form the signal peptide; it reads METQRASLCLGRWSLWLLLLALVVPSASA. The propeptide occupies 30–130; it reads QALSYREAVL…DITCNEIQSV (101 aa). Intrachain disulfides connect C85–C96 and C107–C124.

This sequence belongs to the cathelicidin family.

The protein resides in the secreted. In terms of biological role, exerts antimicrobial activity against both Gram-positive and negative bacteria with minimal inhibitory concentrations ranging over 1-4 micro molar. Its activity appears to be mediated by its ability to damage bacterial membranes. The chain is Antibacterial peptide PMAP-37 (PMAP37) from Sus scrofa (Pig).